A 24-amino-acid polypeptide reads, in one-letter code: TVKXQLSMVLDLNKEIGGQTXTAA.

In terms of assembly, heterotrimer of alpha, beta and gamma subunits. It depends on [3Fe-4S] cluster as a cofactor. Requires [4Fe-4S] cluster as cofactor.

The protein localises to the cytoplasm. Its function is as follows. Electron transfer subunit of the chlorate reductase. The polypeptide is Chlorate reductase subunit beta (Stutzerimonas chloritidismutans (Pseudomonas chloritidismutans)).